Consider the following 884-residue polypeptide: Protein argonaute-4 (884 aa).

The region spanning 242–361 is the PAZ domain; that stretch reads PVIEFMCEVL…LPLEVCNIVA (120 aa). A Piwi domain is found at 532–843; the sequence is LIVVILPGKT…VAFRARYHLV (312 aa). Positions 848 to 870 are disordered; that stretch reads DSAEGSHVSGQSNGRDPQALAKA.

This sequence belongs to the argonaute family. Ago subfamily.

Its subcellular location is the cytoplasm. The protein localises to the P-body. Its function is as follows. Required for RNA-mediated gene silencing (RNAi). Binds to short RNAs such as microRNAs (miRNAs) and represses the translation of mRNAs which are complementary to them. Lacks endonuclease activity and does not appear to cleave target mRNAs. This chain is Protein argonaute-4 (ago4), found in Xenopus laevis (African clawed frog).